The chain runs to 129 residues: Small ribosomal subunit protein uS11 (129 aa).

It belongs to the universal ribosomal protein uS11 family. As to quaternary structure, part of the 30S ribosomal subunit. Interacts with proteins S7 and S18. Binds to IF-3.

Functionally, located on the platform of the 30S subunit, it bridges several disparate RNA helices of the 16S rRNA. Forms part of the Shine-Dalgarno cleft in the 70S ribosome. This is Small ribosomal subunit protein uS11 from Maridesulfovibrio salexigens (strain ATCC 14822 / DSM 2638 / NCIMB 8403 / VKM B-1763) (Desulfovibrio salexigens).